The primary structure comprises 675 residues: MTPVEAQSRIAELRAQVARHDELYHRRAQPQIGDFEYDALKRELAELEAAWPQFARGASPTEQVGDDRTEGFQVYRHRERMMSLDNTYSETELREFHDRLVRELERDGLKFVIEPKIDGLAVSITYEKGKLVRAVTRGNGIEGDDITTNALTIKSLPRELKRADGVPLPAVIEIRGEVFLTTEEFLRINRQREEAGEPLYANPRNLAAGTIKQLDPREVAQRKLEVVLYGRGYVEPASALPETQAQFHGWVKAWGLPTVERFWTATGADEIWAAVQELDALRDTFAYATDGAVVKLDAVPLQRRAGSTSKSPRWAMAYKFAPDRAETQLRAITVQVGRTGVLTPVAELDPVQLAGTTVSRATLHNRDEIARKDIRVGDFVYVEKAGEIIPAVIGVNPARRAPECVPYVFPEKCPECGTAVVQLEGEVAVRCPNFSCPVQVRRRVQHFASKACVDIEGMGEAMVDVLVEKGWVHSVPDIYQLKRENLLTLGKSVEKSTDKLLEAIEASKRAELWRFIHGLGIPHAGAAAAKDLARTFGGLERLASARYEDFIREKASVIGGIGETMALAILAYFAEPRNRAVVDELVRVGVQPVVPNSGSALAGKTFVLTGTLPTLTRDEATAQIEAAGGKVSSGVSKKTSYVLAGEEAGSKLEKARALAVPVIDEAEFLRLLSGG.

NAD(+) is bound by residues 34–38 (DFEYD), 83–84 (SL), and glutamate 114. Lysine 116 functions as the N6-AMP-lysine intermediate in the catalytic mechanism. NAD(+) contacts are provided by arginine 137, glutamate 177, lysine 295, and lysine 319. Zn(2+) contacts are provided by cysteine 413, cysteine 416, cysteine 431, and cysteine 436. A BRCT domain is found at 596 to 675 (NSGSALAGKT…AEFLRLLSGG (80 aa)).

The protein belongs to the NAD-dependent DNA ligase family. LigA subfamily. Mg(2+) is required as a cofactor. The cofactor is Mn(2+).

The catalysed reaction is NAD(+) + (deoxyribonucleotide)n-3'-hydroxyl + 5'-phospho-(deoxyribonucleotide)m = (deoxyribonucleotide)n+m + AMP + beta-nicotinamide D-nucleotide.. DNA ligase that catalyzes the formation of phosphodiester linkages between 5'-phosphoryl and 3'-hydroxyl groups in double-stranded DNA using NAD as a coenzyme and as the energy source for the reaction. It is essential for DNA replication and repair of damaged DNA. This Opitutus terrae (strain DSM 11246 / JCM 15787 / PB90-1) protein is DNA ligase 1.